The sequence spans 8797 residues: MATSRGASRCPRDIANVMQRLQDEQEIVQKRTFTKWINSHLAKRKPPMVVDDLFEDMKDGVKLLALLEVLSGQKLPCEQGRRMKRIHAVANIGTALKFLEGRKIKLVNINSTDIADGRPSIVLGLMWTIILYFQIEELTSNLPQLQSLSSSASSVDSIVSSETPSPPSKRKVTTKIQGNAKKALLKWVQYTAGKQTGIEVKDFGKSWRSGVAFHSVIHAIRPELVDLETVKGRSNRENLEDAFTIAETELGIPRLLDPEDVDVDKPDEKSIMTYVAQFLKHYPDIHNASTDGQEDDEILPGFPSFANSVQNFKREDRVIFKEMKVWIEQFERDLTRAQMVESNLQDKYQSFKHFRVQYEMKRKQIEHLIQPLHRDGKLSLDQALVKQSWDRVTSRLFDWHIQLDKSLPAPLGTIGAWLYRAEVALREEITVQQVHEETANTIQRKLEQHKDLLQNTDAHKRAFHEIYRTRSVNGIPVPPDQLEDMAERFHFVSSTSELHLMKMEFLELKYRLLSLLVLAESKLKSWIIKYGRRESVEQLLQNYVSFIENSKFFEQYEVTYQILKQTAEMYVKADGSVEEAENVMKFMNETTAQWRNLSVEVRSVRSMLEEVISNWDRYGNTVASLQAWLEDAEKMLNQSENAKKDFFRNLPHWIQQHTAMNDAGNFLIETCDEMVSRDLKQQLLLLNGRWRELFMEVKQYAQADEMDRMKKEYTDCVVTLSAFATEAHKKLSEPLEVSFMNVKLLIQDLEDIEQRVPVMDAQYKIITKTAHLITKESPQEEGKEMFATMSKLKEQLTKVKECYSPLLYESQQLLIPLEELEKQMTSFYDSLGKINEIITVLEREAQSSALFKQKHQELLACQENCKKTLTLIEKGSQSVQKFVTLSNVLKHFDQTRLQRQIADIHVAFQSMVKKTGDWKKHVETNSRLMKKFEESRAELEKVLRIAQEGLEEKGDPEELLRRHTEFFSQLDQRVLNAFLKACDELTDILPEQEQQGLQEAVRKLHKQWKDLQGEAPYHLLHLKIDVEKNRFLASVEECRTELDRETKLMPQEGSEKIIKEHRVFFSDKGPHHLCEKRLQLIEELCVKLPVRDPVRDTPGTCHVTLKELRAAIDSTYRKLMEDPDKWKDYTSRFSEFSSWISTNETQLKGIKGEAIDTANHGEVKRAVEEIRNGVTKRGETLSWLKSRLKVLTEVSSENEAQKQGDELAKLSSSFKALVTLLSEVEKMLSNFGDCVQYKEIVKNSLEELISGSKEVQEQAEKILDTENLFEAQQLLLHHQQKTKRISAKKRDVQQQIAQAQQGEGGLPDRGHEELRKLESTLDGLERSRERQERRIQVTLRKWERFETNKETVVRYLFQTGSSHERFLSFSSLESLSSELEQTKEFSKRTESIAVQAENLVKEASEIPLGPQNKQLLQQQAKSIKEQVKKLEDTLEEDIKTMEMVKTKWDHFGSNFETLSVWITEKEKELNALETSSSAMDMQISQIKVTIQEIESKLSSIVGLEEEAQSFAQFVTTGESARIKAKLTQIRRYGEELREHAQCLEGTILGHLSQQQKFEENLRKIQQSVSEFEDKLAVPIKICSSATETYKVLQEHMDLCQALESLSSAITAFSASARKVVNRDSCVQEAAALQQQYEDILRRAKERQTALENLLAHWQRLEKELSSFLTWLERGEAKASSPEMDISADRVKVEGELQLIQALQNEVVSQASFYSKLLQLKESLFSVASKDDVKMMKLHLEQLDERWRDLPQIINKRINFLQSVVAEHQQFDELLLSFSVWIKLFLSELQTTSEISIMDHQVALTRHKDHAAEVESKKGELQSLQGHLAKLGSLGRAEDLHLLQGKAEDCFQLFEEASQVVERRQLALSHLAEFLQSHASLSGILRQLRQTVEATNSMNKNESDLIEKDLNDALQNAKALESAAVSLDGILSKAQYHLKIGSSEQRTSCRATADQLCGEVERIQNLLGTKQSEADALAVLKKAFQDQKEELLKSIEDIEERTDKERLKEPTRQALQQRLRVFNQLEDELNSHEHELCWLKDKAKQIAQKDVAFAPEVDREINRLEVTWDDTKRLIHENQGQCCGLIDLMREYQNLKSAVSKVLENASSVIVTRTTIKDQEDLKWAFSKHETAKNKMNYKQKDLDNFTSKGKHLLSELKKIHSSDFSLVKTDMESTVDKWLDVSEKLEENMDRLRVSLSIWDDVLSTRDEIEGWSNNCVPQMAENISNLDNHLRAEELLKEFESEVKNKALRLEELHSKVNDLKELTKNLETPPDLQFIEADLMQKLEHAKEITEVAKGTLKDFTAQSTQVEKFINDITTWFTKVEESLMNCAQNETCEALKKVKDIQKELQSQQSNISSTQENLNSLCRKYHSAELESLGRAMTGLIKKHEAVSQLCSKTQASLQESLEKHFSESMQEFQEWFLGAKAAAKESSDRTGDSKVLEAKLHDLQNILDSVSDGQSKLDAVTQEGQTLYAHLSKQIVSSIQEQITKANEEFQAFLKQCLKDKQALQDCASELGSFEDQHRKLNLWIHEMEERFNTENLGESKQHIPEKKNEVHKVEMFLGELLAARESLDKLSQRGQLLSEEGHGAGQEGRLCSQLLTSHQNLLRMTKEKLRSCQVALQEHEALEEALQSMWFWVKAIQDRLACAESTLGSKDTLEKRLSQIQDILLMKGEGEVKLNMAIGKGEQALRSSNKEGQRVIQTQLETLKEVWADIMSSSVHAQSTLESVISQWNDYVERKNQLEQWMESVDQKIEHPLQPQPGLKEKFVLLDHLQSILSEAEDHTRALHRLIAKSRELYEKTEDESFKDTAQEELKTQFNDIMTVAKEKMRKVEEIVKDHLMYLDAVHEFTDWLHSAKEELHRWSDMSGDSSATQKKLSKIKELIDSREIGASRLSRVESLAPEVKQNTTASGCELMHTEMQALRADWKQWEDSVFQTQSCLENLVSQMALSEQEFSGQVAQLEQALEQFSALLKTWAQQLTLLEGKNTDEEIVECWHKGQEILDALQKAEPRTEDLKSQLNELCRFSRDLSTYSGKVSGLIKEYNCLCLQASKGCQNKEQILQQRFRKAFRDFQQWLVNAKITTAKCFDIPQNISEVSTSLQKIQEFLSESENGQHKLNMMLSKGELLSTLLTKEKAKGIQAKVTAAKEDWKNFHSNLHQKESALENLKIQMKDFEVSAEPIQDWLSKTEKMVHESSNRLYDLPAKRREQQKLQSVLEEIHCYEPQLNRLKEKAQQLWEGQAASKSFRHRVSQLSSQYLALSNLTKEKVSRLDRIVAEHNQFSLGIKELQDWMTDAIHMLDSYCHPTSDKSVLDSRTLKLEALLSVKQEKEIQMKMIVTRGESVLQNTSPEGIPTIQQQLQSVKDMWASLLSAGIRCKSQLEGALSKWTSYQDGVRQFSGWMDSMEANLNESERQHAELRDKTTMLGKAKLLNEEVLSYSSLLETIEVKGAGMTEHYVTQLELQDLQERYRAIQERAKEAVTKSEKLVRLHQEYQRDLKAFEVWLGQEQEKLDQYSVLEGDAHTHETTLRDLQELQVHCAEGQALLNSVLHTREDVIPSGIPQAEDRALESLRQDWQAYQHRLSETRTQFNNVVNKLRLMEQKFQQVDEWLKTAEEKVSPRTRRQSNRATKEIQLHQMKKWHEEVTAYRDEVEEVGARAQEILDESHVNSRMGCQATQLTSRYQALLLQVLEQIKFLEEEIQSLEESESSLSSYSDWYGSTHKNFKNVATKIDKVDTVMMGKKLKTLEVLLKDMEKGHSLLKSAREKGERAVKYLEEGEAERLRKEIHDHMEQLKELTSTVRKEHMTLEKGLHLAKEFSDKCKALTQWIAEYQEILHVPEEPKMELYEKKAQLSKYKSLQQTVLSHEPSVKSVREKGEALLELVQDVTLKDKIDQLQSDYQDLCSIGKEHVFSLEAKVKDHEDYNSELQEVEKWLLQMSGRLVAPDLLETSSLETITQQLAHHKAMMEEIAGFEDRLNNLQMKGDTLIGQCADHLQAKLKQNVHAHLQGTKDSYSAICSTAQRMYQSLEHELQKHVSRQDTLQQCQAWLSAVQPDLEPSPQPPLSRAEAIKQVKHFRALQEQARTYLDLLCSMCDLSNASVKTTAKDIQQTEQTIEQKLVQAQNLTQGWEEIKHLKSELWIYLQDADQQLQNMKRRHSELELNIAQNMVSQVKDFVKKLQSKQASVNTIIEKVNKLTKKEESPEHKEINHLNDQWLDLCRQSNNLCLQREEDLQRTRDYHDCMNVVEVFLEKFTTEWDNLARSDAESTAVHLEALKKLALALQERKYAIEDLKDQKQKMIEHLNLDDKELVKEQTSHLEQRWFQLEDLIKRKIQVSVTNLEELNVVQSRFQELMEWAEEQQPNIAEALKQSPPPDMAQNLLMDHLAICSELEAKQMLLKSLIKDADRVMADLGLNERQVIQKALSDAQSHVNCLSDLVGQRRKYLNKALSEKTQFLMAVFQATSQIQQHERKIMFREHICLLPDDVSKQVKTCKSAQASLKTYQNEVTGLWAQGRELMKEVTEQEKSEVLGKLQELQSVYDSVLQKCSHRLQELEKNLVSRKHFKEDFDKACHWLKQADIVTFPEINLMNESSELHTQLAKYQNILEQSPEYENLLLTLQRTGQTILPSLNEVDHSYLSEKLNALPRQFNVIVALAKDKFYKVQEAILARKEYASLIELTTQSLSELEAQFLRMSKVPTDLAVEEALSLQDGCRAILDEVAGLGEAVDELNQKKEGFRSTGQPWQPDKMLHLVTLYHRLKRQTEQRVSLLEDTTSAYQEHEKMCQQLERQLKSVKEEQSKVNEETLPAEEKLKMYHSLAGSLQDSGIVLKRVTIHLEDLAPHLDPLAYEKARHQIQSWQGELKLLTSAIGETVTECESRMVQSIDFQTEMSRSLDWLRRVKAELSGPVYLDLNLQDIQEEIRKIQIHQEEVQSSLRIMNALSHKEKEKFTKAKELISADLEHSLAELSELDGDIQEALRTRQATLTEIYSQCQRYYQVFQAANDWLEDAQELLQLAGNGLDVESAEENLKSHMEFFSTEDQFHSNLEELHSLVATLDPLIKPTGKEDLEQKVASLELRSQRMSRDSGAQVDLLQRCTAQWHDYQKAREEVIELMNDTEKKLSEFSLLKTSSSHEAEEKLSEHKALVSVVNSFHEKIVALEEKASQLEKTGNDASKATLSRSMTTVWQRWTRLRAVAQDQEKILEDAVDEWTGFNNKVKKATEMIDQLQDKLPGSSAEKASKAELLTLLEYHDTFVLELEQQQSALGMLRQQTLSMLQDGAAPTPGEEPPLMQEITAMQDRCLNMQEKVKTNGKLVKQELKDREMVETQINSVKCWVQETKEYLGNPTIEIDAQLEELQILLTEATNHRQNIEKMAEEQKEKYLGLYTILPSELSLQLAEVALDLKIRDQIQDKIKEVEQSKATSQELSRQIQKLAKDLTTILTKLKAKTDNVVQAKTDQKVLGEELDGCNSKLMELDAAVQKFLEQNGQLGKPLAKKIGKLTELHQQTIRQAENRLSKLNQAASHLEEYNEMLELILKWIEKAKVLAHGTIAWNSASQLREQYILHQTLLEESKEIDSELEAMTEKLQYLTSVYCTEKMSQQVAELGRETEELRQMIKIRLQNLQDAAKDMKKFEAELKKLQAALEQAQATLTSPEVGRLSLKEQLSHRQHLLSEMESLKPKVQAVQLCQSALRIPEDVVASLPLCHAALRLQEEASRLQHTAIQQCNIMQEAVVQYEQYEQEMKHLQQLIEGAHREIEDKPVATSNIQELQAQISRHEELAQKIKGYQEQIASLNSKCKMLTMKAKHATMLLTVTEVEGLAEGTEDLDGELLPTPSAHPSVVMMTAGRCHTLLSPVTEESGEEGTNSEISSPPACRSPSPVANTDASVNQDIAYYQALSAERLQTDAAKIHPSTSASQEFYEPGLEPSATAKLGDLQRSWETLKNVISEKQRTLYEALERQQKYQDSLQSISTKMEAIELKLSESPEPGRSPESQMAEHQALMDEILMLQDEINELQSSLAEELVSESCEADPAEQLALQSTLTVLAERMSTIRMKASGKRQLLEEKLNDQLEEQRQEQALQRYRCEADELDSWLLSTKATLDTALSPPKEPMDMEAQLMDCQNMLVEIEQKVVALSELSVHNENLLLEGKAHTKDEAEQLAGKLRRLKGSLLELQRALHDKQLNMQGTAQEKEESDVDLTATQSPGVQEWLAQARTTWTQQRQSSLQQQKELEQELAEQKSLLRSVASRGEEILIQHSAAETSGDAGEKPDVLSQELGMEGEKSSAEDQMRMKWESLHQEFSTKQKLLQNVLEQEQEQVLYSRPNRLLSGVPLYKGDVPTQDKSAVTSLLDGLNQAFEEVSSQSGGAKRQSIHLEQKLYDGVSATSTWLDDVEERLFVATALLPEETETCLFNQEILAKDIKEMSEEMDKNKNLFSQAFPENGDNRDVIEDTLGCLLGRLSLLDSVVNQRCHQMKERLQQILNFQNDLKVLFTSLADNKYIILQKLANVFEQPVAEQIEAIQQAEDGLKEFDAGIIELKRRGDKLQVEQPSMQELSKLQDMYDELMMIIGSRRSGLNQNLTLKSQYERALQDLADLLETGQEKMAGDQKIIVSSKEEIQQLLDKHKEYFQGLESHMILTETLFRKIISFAVQKETQFHTELMAQASAVLKRAHKRGVELEYILETWSHLDEDQQELSRQLEVVESSIPSVGLVEENEDRLIDRITLYQHLKSSLNEYQPKLYQVLDDGKRLLISISCSDLESQLNQLGECWLSNTNKMSKELHRLETILKHWTRYQSESADLIHWLQSAKDRLEFWTQQSVTVPQELEMVRDHLNAFLEFSKEVDAQSSLKSSVLSTGNQLLRLKKVDTATLRSELSRIDSQWTDLLTNIPAVQEKLHQLQMDKLPSRHAISEVMSWISLMENVIQKDEDNIKNSIGYKAIHEYLQKYKGFKIDINCKQLTVDFVNQSVLQISSQDVESKRSDKTDFAEQLGAMNKSWQILQGLVTEKIQLLEGLLESWSEYENNVQCLKTWFETQEKRLKQQHRIGDQASVQNALKDCQDLEDLIKAKEKEVEKIEQNGLALIQNKKEDVSSIVMSTLRELGQTWANLDHMVGQLKILLKSVLDQWSSHKVAFDKINSYLMEARYSLSRFRLLTGSLEAVQVQVDNLQNLQDDLEKQERSLQKFGSITNQLLKECHPPVTETLTNTLKEVNMRWNNLLEEIAEQLQSSKALLQLWQRYKDYSKQCASTVQQQEDRTNELLKAATNKDIADDEVATWIQDCNDLLKGLGTVKDSLFFLHELGEQLKQQVDASAASAIQSDQLSLSQHLCALEQALCKQQTSLQAGVLDYETFAKSLEALEAWIVEAEEILQGQDPSHSSDLSTIQERMEELKGQMLKFSSMAPDLDRLNELGYRLPLNDKEIKRMQNLNRHWSLISSQTTERFSKLQSFLLQHQTFLEKCETWMEFLVQTEQKLAVEISGNYQHLLEQQRAHELFQAEMFSRQQILHSIIIDGQRLLEQGQVDDRDEFNLKLTLLSNQWQGVIRRAQQRRGIIDSQIRQWQRYREMAEKLRKWLVEVSYLPMSGLGSVPIPLQQARTLFDEVQFKEKVFLRQQGSYILTVEAGKQLLLSADSGAEAALQAELAEIQEKWKSASMRLEEQKKKLAFLLKDWEKCEKGIADSLEKLRTFKKKLSQSLPDHHEELHAEQMRCKELENAVGSWTDDLTQLSLLKDTLSAYISADDISILNERVELLQRQWEELCHQLSLRRQQIGERLNEWAVFSEKNKELCEWLTQMESKVSQNGDILIEEMIEKLKKDYQEEIAIAQENKIQLQQMGERLAKASHESKASEIEYKLGKVNDRWQHLLDLIAARVKKLKETLVAVQQLDKNMSSLRTWLAHIESELAKPIVYDSCNSEEIQRKLNEQQELQRDIEKHSTGVASVLNLCEVLLHDCDACATDAECDSIQQATRNLDRRWRNICAMSMERRLKIEETWRLWQKFLDDYSRFEDWLKSSERTAAFPSSSGVIYTVAKEELKKFEAFQRQVHECLTQLELINKQYRRLARENRTDSACSLKQMVHEGNQRWDNLQKRVTSILRRLKHFIGQREEFETARDSILVWLTEMDLQLTNIEHFSECDVQAKIKQLKAFQQEISLNHNKIEQIIAQGEQLIEKSEPLDAAIIEEELDELRRYCQEVFGRVERYHKKLIRLPLPDDEHDLSDRELELEDSAALSDLHWHDRSADSLLSPQPSSNLSLSLAQPLRSERSGRDTPASVDSIPLEWDHDYDLSRDLESAMSRALPSEDEEGQDDKDFYLRGAVGLSGDHSALESQIRQLGKALDDSRFQIQQTENIIRSKTPTGPELDTSYKGYMKLLGECSSSIDSVKRLEHKLKEEEESLPGFVNLHSTETQTAGVIDRWELLQAQALSKELRMKQNLQKWQQFNSDLNSIWAWLGDTEEELEQLQRLELSTDIQTIELQIKKLKELQKAVDHRKAIILSINLCSPEFTQADSKESRDLQDRLSQMNGRWDRVCSLLEEWRGLLQDALMQCQGFHEMSHGLLLMLENIDRRKNEIVPIDSNLDAEILQDHHKQLMQIKHELLESQLRVASLQDMSCQLLVNAEGTDCLEAKEKVHVIGNRLKLLLKEVSRHIKELEKLLDVSSSQQDLSSWSSADELDTSGSVSPTSGRSTPNRQKTPRGKCSLSQPGPSVSSPHSRSTKGGSDSSLSEPGPGRSGRGFLFRVLRAALPLQLLLLLLIGLACLVPMSEEDYSCALSNNFARSFHPMLRYTNGPPPL.

The tract at residues methionine 1–serine 289 is actin-binding. Topologically, residues methionine 1–arginine 8746 are cytoplasmic. 2 Calponin-homology (CH) domains span residues isoleucine 27–glutamine 134 and glycine 178–proline 283. Spectrin repeat units follow at residues arginine 314–phenylalanine 397, aspartate 398–lysine 502, methionine 503–glutamate 609, glutamate 610–alanine 703, aspartate 704–isoleucine 815, proline 816–glutamate 923, threonine 924–isoleucine 1024, aspartate 1025–aspartate 1122, proline 1123–glutamate 1246, glutamate 1247–isoleucine 1335, glutamine 1336–valine 1444, lysine 1445–histidine 1550, leucine 1551–leucine 1653, leucine 1654–valine 1763, valine 1764–serine 1879, leucine 1880–leucine 1976, alanine 1977–cysteine 2081, cysteine 2082–serine 2195, leucine 2196–threonine 2303, alanine 2304–alanine 2401, serine 2402–cysteine 2513, alanine 2514–cysteine 2619, glutamine 2620–valine 2731, isoleucine 2732–isoleucine 2838, valine 2839–valine 2962, alanine 2963–glutamate 3062, glutamine 3063–leucine 3171, lysine 3172–leucine 3275, aspartate 3276–alanine 3387, leucine 3388–leucine 3490, valine 3491–phenylalanine 3593, asparagine 3594–tryptophan 3720, tyrosine 3721–glycine 3814, leucine 3815–lysine 3920, valine 3921–tyrosine 4028, glutamine 4029–lysine 4139, serine 4140–aspartate 4235, leucine 4236–serine 4339, valine 4340–alanine 4451, leucine 4452–asparagine 4560, leucine 4561–alanine 4669, isoleucine 4670–threonine 4776, threonine 4777–arginine 4882, methionine 4883–isoleucine 4991, tyrosine 4992–cysteine 5099, threonine 5100–alanine 5209, valine 5210–valine 5318, lysine 5319–lysine 5424, alanine 5425–leucine 5522, asparagine 5523–alanine 5630, alanine 5631–alanine 5736, and valine 5737–histidine 5842. The stretch at arginine 314 to glutamine 8666 forms a coiled coil. Serine 732 is modified (phosphoserine). At threonine 2270 the chain carries Phosphothreonine. Serine 5657 carries the phosphoserine modification. The segment at proline 5859–alanine 5886 is disordered. 19 Spectrin repeats span residues leucine 5962–lysine 6071, leucine 6072–glutamate 6178, arginine 6374–glutamine 6485, isoleucine 6486–leucine 6581, asparagine 6582–tryptophan 6691, serine 6692–lysine 6795, histidine 6796–leucine 6902, histidine 6903–leucine 7020, leucine 7021–valine 7128, leucine 7129–leucine 7237, leucine 7238–glycine 7350, valine 7351–phenylalanine 7454, leucine 7455–isoleucine 7558, aspartate 7559–leucine 7671, leucine 7672–alanine 7783, valine 7784–threonine 7883, leucine 7884–threonine 7997, tryptophan 7998–phenylalanine 8106, and isoleucine 8107–proline 8216. A Phosphoserine modification is found at serine 8223. Residues aspartate 8246 to aspartate 8279 form a disordered region. Residues serine 8247–leucine 8265 show a composition bias toward low complexity. Threonine 8274 is modified (phosphothreonine). Phosphoserine is present on residues serine 8277, serine 8280, and serine 8305. Spectrin repeat units follow at residues serine 8329 to asparagine 8438, leucine 8439 to alanine 8548, and leucine 8549 to glutamine 8666. Threonine 8360 carries the phosphothreonine modification. The segment at serine 8671 to glycine 8734 is disordered. Composition is skewed to polar residues over residues threonine 8680–glutamine 8696 and serine 8704–serine 8729. The KASH domain occupies arginine 8738–leucine 8797. Residues alanine 8747–methionine 8767 traverse the membrane as a helical; Anchor for type IV membrane protein segment. At serine 8768–leucine 8797 the chain is on the perinuclear space side.

Belongs to the nesprin family. In terms of assembly, core component of LINC complexes which are composed of inner nuclear membrane SUN domain-containing proteins coupled to outer nuclear membrane KASH domain-containing nesprins. SUN and KASH domain-containing proteins seem to bind each other promiscuously; however, differentially expression of LINC complex constituents can give rise to specific assemblies. At least SUN1/2-containing core LINC complexes are proposed to be hexameric composed of three protomers of each KASH and SUN domain-containing protein. The SUN2:SYNE1/KASH1 LINC complex is a heterohexamer; the homotrimeric cloverleave-like conformation of the SUN domain is a prerequisite for LINC complex formation in which three separate SYNE1/KASH1 peptides bind at the interface of adjacent SUN domains. Self-associates. Interacts with SYNE3. Interacts with SPAG4/SUN4. May interact with MUSK. Interacts with F-actin via its N-terminal domain. Interacts with EMD and LMNA in vitro. Interacts (via KASH domain) with TMEM258. The disulfid bond with SUN1 or SUN2 is required for stability of the respective LINC complex under tensile forces. In terms of tissue distribution, expressed in HeLa, A431, A172 and HaCaT cells (at protein level). Widely expressed. Highly expressed in skeletal and smooth muscles, heart, spleen, peripheral blood leukocytes, pancreas, cerebellum, stomach, kidney and placenta. Isoform GSRP-56 is predominantly expressed in heart and skeletal muscle (at protein level).

Its subcellular location is the nucleus outer membrane. It localises to the nucleus. The protein localises to the nucleus envelope. It is found in the cytoplasm. The protein resides in the cytoskeleton. Its subcellular location is the myofibril. It localises to the sarcomere. The protein localises to the golgi apparatus. Functionally, multi-isomeric modular protein which forms a linking network between organelles and the actin cytoskeleton to maintain the subcellular spatial organization. As a component of the LINC (LInker of Nucleoskeleton and Cytoskeleton) complex involved in the connection between the nuclear lamina and the cytoskeleton. The nucleocytoplasmic interactions established by the LINC complex play an important role in the transmission of mechanical forces across the nuclear envelope and in nuclear movement and positioning. May be involved in nucleus-centrosome attachment and nuclear migration in neural progenitors implicating LINC complex association with SUN1/2 and probably association with cytoplasmic dynein-dynactin motor complexes; SYNE1 and SYNE2 may act redundantly. Required for centrosome migration to the apical cell surface during early ciliogenesis. May be involved in nuclear remodeling during sperm head formation in spermatogenesis; a probable SUN3:SYNE1/KASH1 LINC complex may tether spermatid nuclei to posterior cytoskeletal structures such as the manchette. The protein is Nesprin-1 of Homo sapiens (Human).